Consider the following 304-residue polypeptide: N-carbamoyl-D-amino acid hydrolase (304 aa).

Residues 5 to 276 enclose the CN hydrolase domain; that stretch reads MILAVGQQGP…DEVITAAVDL (272 aa). Active-site residues include Glu47, Lys127, and Cys172.

In terms of assembly, homotetramer.

The catalysed reaction is an N-carbamoyl-D-amino acid + H2O + 2 H(+) = a D-alpha-amino acid + NH4(+) + CO2. The enzyme catalyzes the hydrolysis of N-carbamoyl-D-amino acids to the corresponding which are useful intermediates in the preparation of beta-lactam antibiotics. Industrial production of beta-lactam antibiotics is now being developed using this enzyme. In Rhizobium radiobacter (Agrobacterium tumefaciens), this protein is N-carbamoyl-D-amino acid hydrolase.